The following is a 435-amino-acid chain: tRNA modification GTPase MnmE (435 aa).

Residues Arg20, Glu77, and Lys117 each contribute to the (6S)-5-formyl-5,6,7,8-tetrahydrofolate site. The 146-residue stretch at Gly214–Leu359 folds into the TrmE-type G domain. GTP is bound by residues Asn224 to Ser229, Thr243 to Thr249, and Asp268 to Gly271. Ser228 and Thr249 together coordinate Mg(2+). Lys435 contacts (6S)-5-formyl-5,6,7,8-tetrahydrofolate.

Belongs to the TRAFAC class TrmE-Era-EngA-EngB-Septin-like GTPase superfamily. TrmE GTPase family. Homodimer. Heterotetramer of two MnmE and two MnmG subunits. K(+) is required as a cofactor.

Its subcellular location is the cytoplasm. Its function is as follows. Exhibits a very high intrinsic GTPase hydrolysis rate. Involved in the addition of a carboxymethylaminomethyl (cmnm) group at the wobble position (U34) of certain tRNAs, forming tRNA-cmnm(5)s(2)U34. This chain is tRNA modification GTPase MnmE, found in Bartonella bacilliformis (strain ATCC 35685 / KC583 / Herrer 020/F12,63).